We begin with the raw amino-acid sequence, 641 residues long: 1-deoxy-D-xylulose-5-phosphate synthase (641 aa).

Residues histidine 80 and 121–123 contribute to the thiamine diphosphate site; that span reads GHS. Residue aspartate 152 coordinates Mg(2+). Thiamine diphosphate contacts are provided by residues 153 to 154, asparagine 181, tyrosine 290, and glutamate 372; that span reads GS. Asparagine 181 is a Mg(2+) binding site.

Belongs to the transketolase family. DXPS subfamily. Homodimer. Mg(2+) serves as cofactor. The cofactor is thiamine diphosphate.

It catalyses the reaction D-glyceraldehyde 3-phosphate + pyruvate + H(+) = 1-deoxy-D-xylulose 5-phosphate + CO2. Its pathway is metabolic intermediate biosynthesis; 1-deoxy-D-xylulose 5-phosphate biosynthesis; 1-deoxy-D-xylulose 5-phosphate from D-glyceraldehyde 3-phosphate and pyruvate: step 1/1. Functionally, catalyzes the acyloin condensation reaction between C atoms 2 and 3 of pyruvate and glyceraldehyde 3-phosphate to yield 1-deoxy-D-xylulose-5-phosphate (DXP). This Rhodobacter capsulatus (Rhodopseudomonas capsulata) protein is 1-deoxy-D-xylulose-5-phosphate synthase.